A 59-amino-acid polypeptide reads, in one-letter code: Large ribosomal subunit protein uL30 (59 aa).

Belongs to the universal ribosomal protein uL30 family. Part of the 50S ribosomal subunit.

The protein is Large ribosomal subunit protein uL30 of Clostridium kluyveri (strain ATCC 8527 / DSM 555 / NBRC 12016 / NCIMB 10680 / K1).